Reading from the N-terminus, the 329-residue chain is Terpene synthase 7 (329 aa).

The DDxx(x)D/E motif motif lies at 99 to 104 (DDLYLE). The NDxxSxxxD/E motif motif lies at 230-238 (NDIHSFNKE).

The protein belongs to the terpene synthase family.

Terpene synthase that converts its substrate farnesyl diphosphate (FPP) into 6 yet unidentified sesquiterpenes. This is Terpene synthase 7 from Dictyostelium purpureum (Slime mold).